Reading from the N-terminus, the 174-residue chain is MAAAKKGAKPKVAGVRFAAGFPEEGAHNHVHFDEQLHDSVVMVSQQEDGNFLVKVGFLKILHKYEISFSLPPVQRLGKSICAVPLPTLNLKVLSITSQAEGHSIKCEYTAHKEGVLKEEMILASETNDKAFVKVVVQARVLDRHHGTPMLLEGVRCTGTELEYDSEQSDWHGFD.

This sequence belongs to the ADISSP family.

It is found in the secreted. Functionally, may be involved in thermogenesis and glucose homeostasis. The protein is Adipose-secreted signaling protein of Xenopus tropicalis (Western clawed frog).